A 1204-amino-acid chain; its full sequence is Cingulin (1204 aa).

The head stretch occupies residues 7–357 (MAEPRGPVDH…GVISSGSSKA (351 aa)). A disordered region spans residues 25–48 (EPVSGAEMGTLRRGGRRPAKDARA). Residues 48-62 (ASTYGVAVRVQGIAG) carry the ZIM motif. Residues 54–67 (AVRVQGIAGQPFVV) form an interaction with TJP1/ZO1 region. Disordered regions lie at residues 68-174 (LNSG…DTAP) and 186-266 (DGQL…FSRA). The span at 93 to 119 (ALSSDSELPENPYSQVQGFPAPSQSST) shows a compositional bias: polar residues. Phosphoserine occurs at positions 95, 96, 98, 135, 137, 140, 155, 165, 214, and 217. Positions 207–231 (EQRKRSKSLDSRLPRDTLEERERQS) are enriched in basic and acidic residues. A compositionally biased stretch (polar residues) spans 232–245 (TNHWNPSTKYNNHV). Low complexity predominate over residues 247-261 (SLKQPAQSPSPSPLS). A phosphoserine mark is found at S258, S276, S338, and S351. Residues 358–1161 (MAGQGELARK…SLEKDSWRKA (804 aa)) adopt a coiled-coil conformation. Residues 379-398 (VKKRQKLEPSRAGLERQLEE) form a disordered region. K579 carries the post-translational modification N6-acetyllysine. Residues 1161–1182 (ASRSAAESALKHEGLSSDEEFD) form a disordered region. Positions 1162 to 1204 (SRSAAESALKHEGLSSDEEFDSVYDPSSIASLLTESNLQTSSC) are tail. Residues S1176, S1177, and S1183 each carry the phosphoserine modification.

This sequence belongs to the cingulin family. As to quaternary structure, homodimer. Interacts with TJP1/ZO1 and SPEF1.

It is found in the cell junction. Its subcellular location is the tight junction. Its function is as follows. Probably plays a role in the formation and regulation of the tight junction (TJ) paracellular permeability barrier. The protein is Cingulin of Plecturocebus moloch (Dusky titi monkey).